We begin with the raw amino-acid sequence, 269 residues long: Regulating synaptic membrane exocytosis protein 4 (269 aa).

In terms of domain architecture, C2 spans 115–233; it reads PMGGVEIGLQ…DLTTLAVGWY (119 aa). Phosphoserine is present on residues S254 and S257.

In terms of assembly, binds PPFIA3. As to expression, brain specific.

It localises to the synapse. In terms of biological role, regulates synaptic membrane exocytosis. In Rattus norvegicus (Rat), this protein is Regulating synaptic membrane exocytosis protein 4 (Rims4).